A 364-amino-acid chain; its full sequence is tRNA 2-selenouridine synthase (364 aa).

Residues 14-137 enclose the Rhodanese domain; that stretch reads LIADTPIIDV…LRQTTIQATI (124 aa). Catalysis depends on cysteine 97, which acts as the S-selanylcysteine intermediate.

It belongs to the SelU family. As to quaternary structure, monomer.

The enzyme catalyses 5-methylaminomethyl-2-thiouridine(34) in tRNA + selenophosphate + (2E)-geranyl diphosphate + H2O + H(+) = 5-methylaminomethyl-2-selenouridine(34) in tRNA + (2E)-thiogeraniol + phosphate + diphosphate. It carries out the reaction 5-methylaminomethyl-2-thiouridine(34) in tRNA + (2E)-geranyl diphosphate = 5-methylaminomethyl-S-(2E)-geranyl-thiouridine(34) in tRNA + diphosphate. It catalyses the reaction 5-methylaminomethyl-S-(2E)-geranyl-thiouridine(34) in tRNA + selenophosphate + H(+) = 5-methylaminomethyl-2-(Se-phospho)selenouridine(34) in tRNA + (2E)-thiogeraniol. The catalysed reaction is 5-methylaminomethyl-2-(Se-phospho)selenouridine(34) in tRNA + H2O = 5-methylaminomethyl-2-selenouridine(34) in tRNA + phosphate. Its function is as follows. Involved in the post-transcriptional modification of the uridine at the wobble position (U34) of tRNA(Lys), tRNA(Glu) and tRNA(Gln). Catalyzes the conversion of 2-thiouridine (S2U-RNA) to 2-selenouridine (Se2U-RNA). Acts in a two-step process involving geranylation of 2-thiouridine (S2U) to S-geranyl-2-thiouridine (geS2U) and subsequent selenation of the latter derivative to 2-selenouridine (Se2U) in the tRNA chain. The protein is tRNA 2-selenouridine synthase of Escherichia coli O8 (strain IAI1).